We begin with the raw amino-acid sequence, 90 residues long: MAVKIRLTRMGSKKKPYYRINVADSRSPRDGRFIETVGTYNPLVAENQVTLKEDRVLAWLENGAQPSDTVRNILSKEGVLKKFHDSKYSK.

The protein belongs to the bacterial ribosomal protein bS16 family.

The polypeptide is Small ribosomal subunit protein bS16 (Streptococcus gordonii (strain Challis / ATCC 35105 / BCRC 15272 / CH1 / DL1 / V288)).